Reading from the N-terminus, the 160-residue chain is Transcription elongation factor GreA (160 aa).

Positions 1 to 72 form a coiled coil; sequence MAEKTYVMTL…QIQILETKIR (72 aa).

This sequence belongs to the GreA/GreB family.

In terms of biological role, necessary for efficient RNA polymerase transcription elongation past template-encoded arresting sites. The arresting sites in DNA have the property of trapping a certain fraction of elongating RNA polymerases that pass through, resulting in locked ternary complexes. Cleavage of the nascent transcript by cleavage factors such as GreA or GreB allows the resumption of elongation from the new 3'terminus. GreA releases sequences of 2 to 3 nucleotides. The protein is Transcription elongation factor GreA of Streptococcus thermophilus (strain CNRZ 1066).